Here is a 354-residue protein sequence, read N- to C-terminus: FAD synthetase 1, chloroplastic (354 aa).

Residues Met-1–Ser-75 constitute a chloroplast transit peptide. The tract at residues Ser-228 to Arg-248 is disordered.

Mg(2+) serves as cofactor.

It localises to the plastid. The protein localises to the chloroplast. It catalyses the reaction FMN + ATP + H(+) = FAD + diphosphate. It functions in the pathway cofactor biosynthesis; FAD biosynthesis; FAD from FMN: step 1/1. Functionally, catalyzes the adenylation of flavin mononucleotide (FMN) to form flavin adenine dinucleotide (FAD) coenzyme. The chain is FAD synthetase 1, chloroplastic from Arabidopsis thaliana (Mouse-ear cress).